The following is a 1366-amino-acid chain: DNA-directed RNA polymerase subunit beta' (1366 aa).

Over residues 1 to 23 (MTSSKPKKSSRVRKTTKNSKKNH) the composition is skewed to basic residues. The segment at 1–37 (MTSSKPKKSSRVRKTTKNSKKNHNTMMPLLPKTPPSF) is disordered. Positions 248, 315, 322, and 325 each coordinate Zn(2+). The interval 1304–1366 (TAILDDPSDE…LQEEGLLSDG (63 aa)) is disordered. The span at 1354–1366 (LEGLQEEGLLSDG) shows a compositional bias: low complexity.

The protein belongs to the RNA polymerase beta' chain family. RpoC2 subfamily. As to quaternary structure, in cyanobacteria the RNAP catalytic core is composed of 2 alpha, 1 beta, 1 beta', 1 gamma and 1 omega subunit. When a sigma factor is associated with the core the holoenzyme is formed, which can initiate transcription. It depends on Zn(2+) as a cofactor.

It catalyses the reaction RNA(n) + a ribonucleoside 5'-triphosphate = RNA(n+1) + diphosphate. DNA-dependent RNA polymerase catalyzes the transcription of DNA into RNA using the four ribonucleoside triphosphates as substrates. In Prochlorococcus marinus subsp. pastoris (strain CCMP1986 / NIES-2087 / MED4), this protein is DNA-directed RNA polymerase subunit beta'.